A 487-amino-acid polypeptide reads, in one-letter code: Pentatricopeptide repeat-containing protein At5g61370, mitochondrial (487 aa).

The transit peptide at 1 to 90 (MMSTTVRLNR…TSPRRLLRFF (90 aa)) directs the protein to the mitochondrion. PPR repeat units follow at residues 137-171 (DKQT…SCPQ), 172-202 (DGFT…HKDV), 207-241 (ELSV…GITP), 242-283 (DLFC…KIQP), 284-318 (TSMS…GCDP), 319-353 (DTGS…GFRP), 354-388 (ERKF…SVGG), and 389-423 (YGQV…DVTL). Positions 466–487 (TKPKLKLKPKRRSKTKKKNLQH) are disordered.

It belongs to the PPR family. P subfamily.

The protein resides in the mitochondrion. This is Pentatricopeptide repeat-containing protein At5g61370, mitochondrial from Arabidopsis thaliana (Mouse-ear cress).